The following is a 508-amino-acid chain: DNA-directed RNA polymerase subunit Rpo1C (508 aa).

Residues 1–123 (MIIWKDTAKN…REKYEYEKKV (123 aa)) are unknown. Residues 124 to 508 (SSQVLDVIAE…IYKGYPKTKK (385 aa)) are DNA-directed RNA polymerase subunit Rpo1C.

This sequence belongs to the RNA polymerase beta' chain family. As to quaternary structure, part of the RNA polymerase complex.

It is found in the cytoplasm. It carries out the reaction RNA(n) + a ribonucleoside 5'-triphosphate = RNA(n+1) + diphosphate. Functionally, DNA-dependent RNA polymerase (RNAP) catalyzes the transcription of DNA into RNA using the four ribonucleoside triphosphates as substrates. Forms part of the jaw domain. In Thermoplasma volcanium (strain ATCC 51530 / DSM 4299 / JCM 9571 / NBRC 15438 / GSS1), this protein is DNA-directed RNA polymerase subunit Rpo1C.